Reading from the N-terminus, the 213-residue chain is Retinitis pigmentosa 9 protein homolog (213 aa).

Residues 1-61 (MSSGAGSRRP…IKEDETKPED (61 aa)) form a disordered region. Residues 1-147 (MSSGAGSRRP…RENKRHEKDV (147 aa)) form a PIM1-binding region. 2 stretches are compositionally biased toward basic and acidic residues: residues 9–21 (RPRE…LQRR) and 52–61 (IKEDETKPED). A CCHC-type zinc finger spans residues 96–114 (QCWRCKRYGHRTGDKECPF). Lys-121 is covalently cross-linked (Glycyl lysine isopeptide (Lys-Gly) (interchain with G-Cter in SUMO2)). The disordered stretch occupies residues 154–213 (QLLEDSTSDDDGSSSSSSGDREKRKKRKKKEKHKKRKKEKKKKKKRKHKASKSSESSDSE). Residues 176–204 (KRKKRKKKEKHKKRKKEKKKKKKRKHKAS) show a composition bias toward basic residues. Ser-204 and Ser-206 each carry phosphoserine; by PIM1; in vitro.

In terms of assembly, binds to PIM1. Binds to ZNHIT4. Highly expressed in the testis, moderately in the kidney, liver and spleen, and weakly in the skeletal muscle and heart.

It is found in the nucleus. In terms of biological role, is thought to be a target protein for the PIM1 kinase. May play some roles in B-cell proliferation in association with PIM1. The protein is Retinitis pigmentosa 9 protein homolog (rp9) of Mus musculus (Mouse).